Reading from the N-terminus, the 458-residue chain is Glutamyl-tRNA(Gln) amidotransferase subunit D (458 aa).

The 338-residue stretch at 97–434 folds into the Asparaginase/glutaminase domain; sequence PNVSVMSTGG…KEVERLMRTN (338 aa). Active-site residues include T107, T185, D186, and K264.

The protein belongs to the asparaginase 1 family. GatD subfamily. In terms of assembly, heterodimer of GatD and GatE.

It carries out the reaction L-glutamyl-tRNA(Gln) + L-glutamine + ATP + H2O = L-glutaminyl-tRNA(Gln) + L-glutamate + ADP + phosphate + H(+). Allows the formation of correctly charged Gln-tRNA(Gln) through the transamidation of misacylated Glu-tRNA(Gln) in organisms which lack glutaminyl-tRNA synthetase. The reaction takes place in the presence of glutamine and ATP through an activated gamma-phospho-Glu-tRNA(Gln). The GatDE system is specific for glutamate and does not act on aspartate. In Methanopyrus kandleri (strain AV19 / DSM 6324 / JCM 9639 / NBRC 100938), this protein is Glutamyl-tRNA(Gln) amidotransferase subunit D.